A 410-amino-acid chain; its full sequence is WD repeat-containing protein jip5 (410 aa).

WD repeat units follow at residues 9-48 (PLSA…EEEH), 74-113 (RHKG…VENK), 119-160 (AKDG…SKVA), 223-264 (VSST…DQDE), 273-316 (GGGE…VVSE), and 320-357 (DETE…IGGE). The interval 41–65 (PTEEEEEHSDDEQASVSSSRNGKGH) is disordered. Over residues 43-53 (EEEEEHSDDEQ) the composition is skewed to acidic residues. The segment at 354–410 (IGGEKRGFGGDSDDSDDDSDDSDHEPKQGDDSRRKRKKQKGKDRGKGPEIMAFADLD) is disordered. Positions 364–376 (DSDDSDDDSDDSD) are enriched in acidic residues. Over residues 377-386 (HEPKQGDDSR) the composition is skewed to basic and acidic residues.

Belongs to the WD repeat WDR55 family.

It localises to the nucleus. Its subcellular location is the nucleolus. The sequence is that of WD repeat-containing protein jip5 (jip5) from Emericella nidulans (strain FGSC A4 / ATCC 38163 / CBS 112.46 / NRRL 194 / M139) (Aspergillus nidulans).